A 61-amino-acid polypeptide reads, in one-letter code: Large ribosomal subunit protein uL30 (61 aa).

This sequence belongs to the universal ribosomal protein uL30 family. In terms of assembly, part of the 50S ribosomal subunit.

The chain is Large ribosomal subunit protein uL30 from Bordetella parapertussis (strain 12822 / ATCC BAA-587 / NCTC 13253).